The primary structure comprises 224 residues: UPF0758 protein PLES_57141 (224 aa).

The MPN domain maps to 102 to 224 (ILESPQAVRD…PLSLAEYGWL (123 aa)). Positions 173, 175, and 186 each coordinate Zn(2+). The JAMM motif signature appears at 173–186 (HNHPSGDARPSLAD).

This sequence belongs to the UPF0758 family.

This chain is UPF0758 protein PLES_57141, found in Pseudomonas aeruginosa (strain LESB58).